Consider the following 61-residue polypeptide: Large ribosomal subunit protein bL32 (61 aa).

Residues 1-22 are compositionally biased toward basic residues; sequence MAVPKKKTSKSRRDMRRSHHAL. The disordered stretch occupies residues 1–27; the sequence is MAVPKKKTSKSRRDMRRSHHALKPSAY.

Belongs to the bacterial ribosomal protein bL32 family.

The sequence is that of Large ribosomal subunit protein bL32 from Rhodospirillum rubrum (strain ATCC 11170 / ATH 1.1.1 / DSM 467 / LMG 4362 / NCIMB 8255 / S1).